The sequence spans 214 residues: Putative 3-methyladenine DNA glycosylase (214 aa).

Belongs to the DNA glycosylase MPG family.

This chain is Putative 3-methyladenine DNA glycosylase, found in Gloeobacter violaceus (strain ATCC 29082 / PCC 7421).